A 390-amino-acid chain; its full sequence is Succinate--CoA ligase [ADP-forming] subunit beta (390 aa).

Residues 9 to 248 (KDILRKFGVT…TSEEDPFEVE (240 aa)) form the ATP-grasp domain. ATP is bound by residues lysine 50, 57-59 (GRG), glutamate 103, methionine 106, and glutamate 111. The Mg(2+) site is built by asparagine 203 and aspartate 217. Substrate-binding positions include asparagine 268 and 325–327 (GIV).

Belongs to the succinate/malate CoA ligase beta subunit family. In terms of assembly, heterotetramer of two alpha and two beta subunits. It depends on Mg(2+) as a cofactor.

It catalyses the reaction succinate + ATP + CoA = succinyl-CoA + ADP + phosphate. The enzyme catalyses GTP + succinate + CoA = succinyl-CoA + GDP + phosphate. The protein operates within carbohydrate metabolism; tricarboxylic acid cycle; succinate from succinyl-CoA (ligase route): step 1/1. Succinyl-CoA synthetase functions in the citric acid cycle (TCA), coupling the hydrolysis of succinyl-CoA to the synthesis of either ATP or GTP and thus represents the only step of substrate-level phosphorylation in the TCA. The beta subunit provides nucleotide specificity of the enzyme and binds the substrate succinate, while the binding sites for coenzyme A and phosphate are found in the alpha subunit. The polypeptide is Succinate--CoA ligase [ADP-forming] subunit beta (Chlorobium chlorochromatii (strain CaD3)).